Reading from the N-terminus, the 764-residue chain is 1,4-alpha-glucan branching enzyme GlgB (764 aa).

The tract at residues 1 to 46 is disordered; the sequence is MSAARQPSPTVRDKAAPEPAAPAAPKGARAPRARRAAPPHGVRPAP. Residues 17-28 are compositionally biased toward low complexity; it reads PEPAAPAAPKGA. The active-site Nucleophile is Asp-440. Glu-493 (proton donor) is an active-site residue.

The protein belongs to the glycosyl hydrolase 13 family. GlgB subfamily. As to quaternary structure, monomer.

It catalyses the reaction Transfers a segment of a (1-&gt;4)-alpha-D-glucan chain to a primary hydroxy group in a similar glucan chain.. It participates in glycan biosynthesis; glycogen biosynthesis. Catalyzes the formation of the alpha-1,6-glucosidic linkages in glycogen by scission of a 1,4-alpha-linked oligosaccharide from growing alpha-1,4-glucan chains and the subsequent attachment of the oligosaccharide to the alpha-1,6 position. The sequence is that of 1,4-alpha-glucan branching enzyme GlgB (glgB) from Kitasatospora aureofaciens (Streptomyces aureofaciens).